A 1044-amino-acid polypeptide reads, in one-letter code: Disease resistance protein PIK6-NP (1044 aa).

The segment at 3–184 (LAVGASEATM…PQIVSIKEPV (182 aa)) is structured coiled coil (CC) domain. The 357-residue stretch at 187 to 543 (KTVMENLEKW…IAEGFATEKQ (357 aa)) folds into the NB-ARC domain. The disordered stretch occupies residues 258 to 302 (QVSKQEEAGGSTESSSRDENTREPQGSSSTSSREENTAESGTKRM). LRR repeat units follow at residues 635 to 657 (LAQVRSLTVFGNLNHVPFHSFNY), 682 to 705 (MLVLKYLSIRRTEIAKIPSKIEKL), and 706 to 728 (EYLETLDIRETYVEELPKSVGQL). The interval 737 to 771 (GNKNTRKGLRLPQEKRNKAMKNPSPQGKTKEPAEK) is disordered. 6 LRR repeats span residues 808–834 (LTGLRKLAIYKLKISEENDTFKELLSS), 840–862 (SCGLQTLAINDENSKFINSLYNM), 866–888 (PRYLVSLELSGKLKWLPEWITSI), 889–911 (TTLNKLTISITVLTTETLEILRN), 935–958 (KGILEDNKLATDGEIVIPAKEFKS), and 980–1004 (MPALEIIEMRFQEFEGLFGIEILEN).

Belongs to the disease resistance NB-LRR family.

Functionally, probable disease resistance protein. Resistance proteins guard the plant against pathogens that contain an appropriate avirulence protein via an indirect interaction with this avirulence protein. That triggers a defense system including the hypersensitive response, which restricts the pathogen growth. At the opposite of cultivar Kusabue, the cultivar Nipponbare doesn't recognize the effector avirulence protein AVR-Pik from M.oryzae. The sequence is that of Disease resistance protein PIK6-NP from Oryza sativa subsp. japonica (Rice).